A 121-amino-acid chain; its full sequence is Protein VraC (121 aa).

The chain is Protein VraC (vraC) from Staphylococcus aureus (strain MRSA252).